A 312-amino-acid polypeptide reads, in one-letter code: Protoheme IX farnesyltransferase (312 aa).

Transmembrane regions (helical) follow at residues 29-49, 50-70, 90-110, 117-137, 150-170, 177-197, 223-243, 248-268, and 292-312; these read VMSL…GHMN, PVLA…SGAL, IPAG…LSAF, LMVN…YAVV, IVIG…AATG, VVLF…LSLF, ALFY…LGFA, GAIS…MWVA, and LFAV…FGGF.

Belongs to the UbiA prenyltransferase family. Protoheme IX farnesyltransferase subfamily.

Its subcellular location is the cell inner membrane. It catalyses the reaction heme b + (2E,6E)-farnesyl diphosphate + H2O = Fe(II)-heme o + diphosphate. Its pathway is porphyrin-containing compound metabolism; heme O biosynthesis; heme O from protoheme: step 1/1. Functionally, converts heme B (protoheme IX) to heme O by substitution of the vinyl group on carbon 2 of heme B porphyrin ring with a hydroxyethyl farnesyl side group. The sequence is that of Protoheme IX farnesyltransferase from Brucella anthropi (strain ATCC 49188 / DSM 6882 / CCUG 24695 / JCM 21032 / LMG 3331 / NBRC 15819 / NCTC 12168 / Alc 37) (Ochrobactrum anthropi).